The primary structure comprises 299 residues: GTPase Era (299 aa).

Residues 4 to 171 enclose the Era-type G domain; it reads KSGFVAILGR…ISLLTDNLEE (168 aa). The interval 12-19 is G1; the sequence is GRPNVGKS. 12-19 contacts GTP; sequence GRPNVGKS. The G2 stretch occupies residues 38-42; that stretch reads QTTRN. The tract at residues 59–62 is G3; the sequence is DTPG. Residues 59-63 and 121-124 each bind GTP; these read DTPGI and NKID. Residues 121–124 are G4; that stretch reads NKID. Positions 150–152 are G5; it reads ISA. Residues 202–280 form the KH type-2 domain; it reads TQQEIPHSVA…YLETWVKVKK (79 aa).

The protein belongs to the TRAFAC class TrmE-Era-EngA-EngB-Septin-like GTPase superfamily. Era GTPase family. As to quaternary structure, monomer.

It localises to the cytoplasm. The protein resides in the cell membrane. An essential GTPase that binds both GDP and GTP, with rapid nucleotide exchange. Plays a role in 16S rRNA processing and 30S ribosomal subunit biogenesis and possibly also in cell cycle regulation and energy metabolism. The protein is GTPase Era of Streptococcus uberis (strain ATCC BAA-854 / 0140J).